A 324-amino-acid polypeptide reads, in one-letter code: Olfactory receptor 6K2 (324 aa).

The Extracellular segment spans residues 1-25; that stretch reads MESPNRTTIQEFIFSAFPYSWVKSV. Asn5 is a glycosylation site (N-linked (GlcNAc...) asparagine). A helical membrane pass occupies residues 26–46; the sequence is VCFVPLLFIYAFIVVGNLVII. The Cytoplasmic segment spans residues 47–54; the sequence is TVVQLNTH. A helical transmembrane segment spans residues 55 to 75; the sequence is LHTPMYTFISALSFLEIWYTT. Topologically, residues 76-98 are extracellular; sequence ATIPKMLSSLLSERSISFNGCLL. Cysteines 96 and 188 form a disulfide. Residues 99–119 traverse the membrane as a helical segment; the sequence is QMYFFHSTGICEVCLLTVMAF. The Cytoplasmic segment spans residues 120–138; that stretch reads DHYLAICSPLHYPSIMTPK. A helical transmembrane segment spans residues 139 to 159; it reads LCTQLTLSCCVCGFITPLPEI. Over 160 to 198 the chain is Extracellular; that stretch reads AWISTLPFCGSNHLEHIFCDFLPVLRLACTDTRAIVMIQ. The chain crosses the membrane as a helical span at residues 199-218; sequence VVDVIHAVEIITAVMLIFMS. Topologically, residues 219-238 are cytoplasmic; the sequence is YDGIVAVILRIHSAGGRRTA. A helical membrane pass occupies residues 239-259; sequence FSTCVSHFIVFSLFFGSVTLM. The Extracellular segment spans residues 260-272; sequence YLRFSATYSLFWD. A helical transmembrane segment spans residues 273 to 293; the sequence is IAIALAFAVLSPFFNPIIYSL. At 294–324 the chain is on the cytoplasmic side; the sequence is RNKEIKEAIKKHIGQAKIFFSVRPGTSSKIF.

It belongs to the G-protein coupled receptor 1 family.

Its subcellular location is the cell membrane. In terms of biological role, odorant receptor. The sequence is that of Olfactory receptor 6K2 (OR6K2) from Homo sapiens (Human).